The following is a 121-amino-acid chain: uncharacterized protein (121 aa).

This is an uncharacterized protein from Aquifex aeolicus (strain VF5).